The following is a 591-amino-acid chain: Pentatricopeptide repeat-containing protein At2g35130 (591 aa).

PPR repeat units follow at residues 154-188 (DVICFNLLIDAYGQKFQYKEAESLYVQLLESRYVP), 189-223 (TEDTYALLIKAYCMAGLIERAEVVLVEMQNHHVSP), 227-262 (GVTVYNAYIEGLMKRKGNTEEAIDVFQRMKRDRCKP), 263-297 (TTETYNLMINLYGKASKSYMSWKLYCEMRSHQCKP), 298-332 (NICTYTALVNAFAREGLCEKAEEIFEQLQEDGLEP), 333-367 (DVYVYNALMESYSRAGYPYGAAEIFSLMQHMGCEP), 368-402 (DRASYNIMVDAYGRAGLHSDAEAVFEEMKRLGIAP), 403-437 (TMKSHMLLLSAYSKARDVTKCEAIVKEMSENGVEP), 438-472 (DTFVLNSMLNLYGRLGQFTKMEKILAEMENGPCTA), 473-507 (DISTYNILINIYGKAGFLERIEELFVELKEKNFRP), 508-542 (DVVTWTSRIGAYSRKKLYVKCLEVFEEMIDSGCAP), and 543-573 (DGGTAKVLLSACSSEEQVEQVTSVLRTMHKG).

It belongs to the PPR family. P subfamily.

The polypeptide is Pentatricopeptide repeat-containing protein At2g35130 (Arabidopsis thaliana (Mouse-ear cress)).